A 222-amino-acid chain; its full sequence is Adenylate kinase (222 aa).

An ATP-binding site is contributed by Gly10–Thr15. The tract at residues Ser30 to Val59 is NMP. AMP-binding positions include Thr31, Arg36, Gly57–Val59, Gly85–Arg88, and Gln92. The LID stretch occupies residues Gly122 to Asp159. Residues Arg123 and Thr132–Tyr133 contribute to the ATP site. The interval Asn138–Lys160 is disordered. Residues Arg156 and Arg167 each coordinate AMP. Gly207 lines the ATP pocket.

It belongs to the adenylate kinase family. As to quaternary structure, monomer.

The protein resides in the cytoplasm. It catalyses the reaction AMP + ATP = 2 ADP. It participates in purine metabolism; AMP biosynthesis via salvage pathway; AMP from ADP: step 1/1. Catalyzes the reversible transfer of the terminal phosphate group between ATP and AMP. Plays an important role in cellular energy homeostasis and in adenine nucleotide metabolism. This Ralstonia pickettii (strain 12J) protein is Adenylate kinase.